Here is a 68-residue protein sequence, read N- to C-terminus: Purkinje cell protein 4-like protein 1 (68 aa).

Polar residues predominate over residues 1-16 (MSELNTKTSPATNQAA). The segment at 1 to 45 (MSELNTKTSPATNQAAGQEEKGKAGNVKKAEEEEEIDIDLTAPET) is disordered. A Phosphothreonine modification is found at T8. The span at 18-31 (QEEKGKAGNVKKAE) shows a compositional bias: basic and acidic residues. The IQ domain maps to 45-68 (TEKAALAIQGKFRRFQKRKKDPSS).

The protein belongs to the PCP4 family.

The chain is Purkinje cell protein 4-like protein 1 (PCP4L1) from Homo sapiens (Human).